The chain runs to 243 residues: Cell division protein FtsQ (243 aa).

The Cytoplasmic segment spans residues 1-19 (MKRYNAKRKTHRNLKSIKK). A helical transmembrane segment spans residues 20 to 40 (LIPTVLALLAFVSLLAGIITL). Over 41 to 243 (HNPKTLPFRQ…SNGLAIQWKN (203 aa)) the chain is Periplasmic. Residues 46–115 (LPFRQIKITV…NELEIQVEEQ (70 aa)) form the POTRA domain.

The protein belongs to the FtsQ/DivIB family. FtsQ subfamily. As to quaternary structure, part of a complex composed of FtsB, FtsL and FtsQ.

It localises to the cell inner membrane. Its function is as follows. Essential cell division protein. May link together the upstream cell division proteins, which are predominantly cytoplasmic, with the downstream cell division proteins, which are predominantly periplasmic. May control correct divisome assembly. The protein is Cell division protein FtsQ of Coxiella burnetii (strain RSA 493 / Nine Mile phase I).